The primary structure comprises 224 residues: Deoxyribose-phosphate aldolase (224 aa).

D92 acts as the Proton donor/acceptor in catalysis. K155 acts as the Schiff-base intermediate with acetaldehyde in catalysis. Residue K184 is the Proton donor/acceptor of the active site.

Belongs to the DeoC/FbaB aldolase family. DeoC type 1 subfamily.

Its subcellular location is the cytoplasm. The catalysed reaction is 2-deoxy-D-ribose 5-phosphate = D-glyceraldehyde 3-phosphate + acetaldehyde. Its pathway is carbohydrate degradation; 2-deoxy-D-ribose 1-phosphate degradation; D-glyceraldehyde 3-phosphate and acetaldehyde from 2-deoxy-alpha-D-ribose 1-phosphate: step 2/2. In terms of biological role, catalyzes a reversible aldol reaction between acetaldehyde and D-glyceraldehyde 3-phosphate to generate 2-deoxy-D-ribose 5-phosphate. This chain is Deoxyribose-phosphate aldolase, found in Shouchella clausii (strain KSM-K16) (Alkalihalobacillus clausii).